A 495-amino-acid polypeptide reads, in one-letter code: Fibronectin type III and SPRY domain-containing protein 1 (495 aa).

Residues Gln-4–Glu-99 adopt a coiled-coil conformation. Positions Leu-105–Leu-162 constitute a COS domain. One can recognise a Fibronectin type-III domain in the interval Val-164–Phe-268. The B30.2/SPRY domain occupies Leu-281–Ile-476. The segment at Lys-306–Val-332 is disordered. Position 490 is a phosphoserine (Ser-490).

In terms of assembly, oligomerization is required for binding to microtubules.

It is found in the cytoplasm. The protein resides in the cytoskeleton. Its subcellular location is the microtubule organizing center. It localises to the centrosome. The protein localises to the nucleus. It is found in the cleavage furrow. May be involved in microtubule organization and stabilization. The protein is Fibronectin type III and SPRY domain-containing protein 1 (fsd1) of Danio rerio (Zebrafish).